Consider the following 399-residue polypeptide: Putative 3'-5' exonuclease R431 (399 aa).

Residues 118-297 (FQIVDNWIEN…IYNELQLMTN (180 aa)) form the 3'-5' exonuclease domain. Positions 335–399 (ERRLKSIESK…NKYVIITRHC (65 aa)) constitute an R3H domain.

The polypeptide is Putative 3'-5' exonuclease R431 (Acanthamoeba polyphaga (Amoeba)).